We begin with the raw amino-acid sequence, 525 residues long: GMP synthase [glutamine-hydrolyzing] (525 aa).

The region spanning 8 to 207 (KILILDFGSQ…AVAICGCGTN (200 aa)) is the Glutamine amidotransferase type-1 domain. Catalysis depends on C85, which acts as the Nucleophile. Active-site residues include H181 and E183. In terms of domain architecture, GMPS ATP-PPase spans 208 to 400 (WKPSSIIEDA…LGLPYNMLYR (193 aa)). Residue 235–241 (SGGVDSS) participates in ATP binding.

As to quaternary structure, homodimer.

The enzyme catalyses XMP + L-glutamine + ATP + H2O = GMP + L-glutamate + AMP + diphosphate + 2 H(+). It functions in the pathway purine metabolism; GMP biosynthesis; GMP from XMP (L-Gln route): step 1/1. In terms of biological role, catalyzes the synthesis of GMP from XMP. The sequence is that of GMP synthase [glutamine-hydrolyzing] from Shewanella denitrificans (strain OS217 / ATCC BAA-1090 / DSM 15013).